An 877-amino-acid polypeptide reads, in one-letter code: Alanine--tRNA ligase (877 aa).

Residues His-567, His-571, Cys-669, and His-673 each coordinate Zn(2+).

This sequence belongs to the class-II aminoacyl-tRNA synthetase family. The cofactor is Zn(2+).

Its subcellular location is the cytoplasm. It catalyses the reaction tRNA(Ala) + L-alanine + ATP = L-alanyl-tRNA(Ala) + AMP + diphosphate. Functionally, catalyzes the attachment of alanine to tRNA(Ala) in a two-step reaction: alanine is first activated by ATP to form Ala-AMP and then transferred to the acceptor end of tRNA(Ala). Also edits incorrectly charged Ser-tRNA(Ala) and Gly-tRNA(Ala) via its editing domain. This chain is Alanine--tRNA ligase, found in Rickettsia prowazekii (strain Madrid E).